We begin with the raw amino-acid sequence, 660 residues long: Acetyl-coenzyme A synthetase (660 aa).

Residues 197-200 and Thr317 each bind CoA; that span reads RGGK. Residues 397-399, 421-426, Asp512, and Arg528 contribute to the ATP site; these read GEP and DTWWQT. A CoA-binding site is contributed by Ser536. Arg539 lines the ATP pocket. 3 residues coordinate Mg(2+): Val550, His552, and Val555. Lys625 bears the N6-acetyllysine mark.

This sequence belongs to the ATP-dependent AMP-binding enzyme family. The cofactor is Mg(2+). In terms of processing, acetylated. Deacetylation by the SIR2-homolog deacetylase activates the enzyme.

The catalysed reaction is acetate + ATP + CoA = acetyl-CoA + AMP + diphosphate. Catalyzes the conversion of acetate into acetyl-CoA (AcCoA), an essential intermediate at the junction of anabolic and catabolic pathways. AcsA undergoes a two-step reaction. In the first half reaction, AcsA combines acetate with ATP to form acetyl-adenylate (AcAMP) intermediate. In the second half reaction, it can then transfer the acetyl group from AcAMP to the sulfhydryl group of CoA, forming the product AcCoA. The chain is Acetyl-coenzyme A synthetase from Burkholderia mallei (strain NCTC 10247).